The primary structure comprises 172 residues: Large ribosomal subunit protein uL10 (172 aa).

This sequence belongs to the universal ribosomal protein uL10 family. As to quaternary structure, part of the ribosomal stalk of the 50S ribosomal subunit. The N-terminus interacts with L11 and the large rRNA to form the base of the stalk. The C-terminus forms an elongated spine to which L12 dimers bind in a sequential fashion forming a multimeric L10(L12)X complex.

Functionally, forms part of the ribosomal stalk, playing a central role in the interaction of the ribosome with GTP-bound translation factors. The sequence is that of Large ribosomal subunit protein uL10 from Chlorobium luteolum (strain DSM 273 / BCRC 81028 / 2530) (Pelodictyon luteolum).